The sequence spans 537 residues: Putative cysteine ligase BshC (537 aa).

The stretch at 422 to 450 (IEKVEGMIEQQRRLYQDLLDEVAGNQNNI) forms a coiled coil.

Belongs to the BshC family.

Its function is as follows. Involved in bacillithiol (BSH) biosynthesis. May catalyze the last step of the pathway, the addition of cysteine to glucosamine malate (GlcN-Mal) to generate BSH. In Staphylococcus aureus (strain MRSA252), this protein is Putative cysteine ligase BshC.